The primary structure comprises 874 residues: Valine--tRNA ligase (874 aa).

Residues Pro-51 to His-61 carry the 'HIGH' region motif. Residues Lys-533 to Ser-537 carry the 'KMSKS' region motif. Residue Lys-536 participates in ATP binding. Positions Leu-813–Gln-873 form a coiled coil.

It belongs to the class-I aminoacyl-tRNA synthetase family. ValS type 1 subfamily. As to quaternary structure, monomer.

It localises to the cytoplasm. The enzyme catalyses tRNA(Val) + L-valine + ATP = L-valyl-tRNA(Val) + AMP + diphosphate. Its function is as follows. Catalyzes the attachment of valine to tRNA(Val). As ValRS can inadvertently accommodate and process structurally similar amino acids such as threonine, to avoid such errors, it has a 'posttransfer' editing activity that hydrolyzes mischarged Thr-tRNA(Val) in a tRNA-dependent manner. The chain is Valine--tRNA ligase from Helicobacter pylori (strain ATCC 700392 / 26695) (Campylobacter pylori).